Reading from the N-terminus, the 298-residue chain is MLKIGSHVSMSGKKMLLAASEEAVSYGATTFMIYTGAPQNTRRKPIEELNIEAGRKHMEQNGIEEIIVHAPYIINVGNTTKPETFQLGVDFLRMEIERTSALGVAKQIVLHPGAHVGAGADAGIQQIIKGLNEVLTPDQTVNIALETMAGKGTECGRSFEEIAKIIDGVKYNEKLSVCFDTCHTHDAGYDIVNNFDGVLNEFDKIVGIDRLQVLHINDSKNVRGAGKDRHENIGFGHIGYKALHHIVHHPQLTHVPKILETPYVGEDKKDKKPPYKLEIEMLKNGTFDEGLLEKIKAQ.

Zn(2+) is bound by residues H69, H111, E146, D180, H183, H215, D228, H230, and E260.

Belongs to the AP endonuclease 2 family. Requires Zn(2+) as cofactor.

The enzyme catalyses Endonucleolytic cleavage to 5'-phosphooligonucleotide end-products.. Its function is as follows. Endonuclease IV plays a role in DNA repair. It cleaves phosphodiester bonds at apurinic or apyrimidinic (AP) sites, generating a 3'-hydroxyl group and a 5'-terminal sugar phosphate. The chain is Probable endonuclease 4 from Bacillus anthracis (strain A0248).